The following is a 417-amino-acid chain: MTEKENLGGSTLLPAYFGEFGGQFVAESLLPALDQLEKAFVDATNSPEFREELGGYLRDYLGRPTPLTECSNLPLAGEGKGFARIFLKREDLVHGGAHKTNQVIGQVLLAKRMGKTRIIAETGAGQHGTATALACALMGLECVVYMGAKDVARQQPNVYRMQLHGAKVIPVESGSGTLKDAVNEALRDWTATFHESHYLLGTAAGPHPFPTIVREFHKVISEEAKAQMLERTGKLPDVVVACVGGGSNAIGMFADFIDDEGVELVGAEPAGEGLDSGKHGATITNGQIGILHGTRSYLMRNSDGQVEESYSISAGLDYPGVGPQHAHLHATGRATYVGITDAEALQAFQYLARYEGIIPALESSHAFAYALKRAKTAEEEGQNLTILVSLSGRGDKDVDHVRRTLEENPELILKDNR.

The residue at position 99 (Lys99) is an N6-(pyridoxal phosphate)lysine.

The protein belongs to the TrpB family. In terms of assembly, tetramer of two alpha and two beta chains. It depends on pyridoxal 5'-phosphate as a cofactor.

The enzyme catalyses (1S,2R)-1-C-(indol-3-yl)glycerol 3-phosphate + L-serine = D-glyceraldehyde 3-phosphate + L-tryptophan + H2O. It participates in amino-acid biosynthesis; L-tryptophan biosynthesis; L-tryptophan from chorismate: step 5/5. Its function is as follows. The beta subunit is responsible for the synthesis of L-tryptophan from indole and L-serine. In Corynebacterium glutamicum (strain ATCC 13032 / DSM 20300 / JCM 1318 / BCRC 11384 / CCUG 27702 / LMG 3730 / NBRC 12168 / NCIMB 10025 / NRRL B-2784 / 534), this protein is Tryptophan synthase beta chain (trpB).